The primary structure comprises 260 residues: 5'-nucleotidase SurE (260 aa).

Residues D19, D20, S51, and N104 each contribute to the a divalent metal cation site.

The protein belongs to the SurE nucleotidase family. A divalent metal cation is required as a cofactor.

It is found in the cytoplasm. The catalysed reaction is a ribonucleoside 5'-phosphate + H2O = a ribonucleoside + phosphate. Nucleotidase that shows phosphatase activity on nucleoside 5'-monophosphates. The chain is 5'-nucleotidase SurE from Paramagnetospirillum magneticum (strain ATCC 700264 / AMB-1) (Magnetospirillum magneticum).